The primary structure comprises 401 residues: Nicotinate phosphoribosyltransferase (401 aa).

Histidine 221 bears the Phosphohistidine; by autocatalysis mark.

It belongs to the NAPRTase family. Post-translationally, transiently phosphorylated on a His residue during the reaction cycle. Phosphorylation strongly increases the affinity for substrates and increases the rate of nicotinate D-ribonucleotide production. Dephosphorylation regenerates the low-affinity form of the enzyme, leading to product release.

The enzyme catalyses nicotinate + 5-phospho-alpha-D-ribose 1-diphosphate + ATP + H2O = nicotinate beta-D-ribonucleotide + ADP + phosphate + diphosphate. It functions in the pathway cofactor biosynthesis; NAD(+) biosynthesis; nicotinate D-ribonucleotide from nicotinate: step 1/1. Functionally, catalyzes the synthesis of beta-nicotinate D-ribonucleotide from nicotinate and 5-phospho-D-ribose 1-phosphate at the expense of ATP. This is Nicotinate phosphoribosyltransferase from Pectobacterium carotovorum subsp. carotovorum (strain PC1).